The sequence spans 274 residues: 2,3,4,5-tetrahydropyridine-2,6-dicarboxylate N-succinyltransferase (274 aa).

Substrate is bound by residues Arg106 and Asp143.

Belongs to the transferase hexapeptide repeat family. Homotrimer.

Its subcellular location is the cytoplasm. It carries out the reaction (S)-2,3,4,5-tetrahydrodipicolinate + succinyl-CoA + H2O = (S)-2-succinylamino-6-oxoheptanedioate + CoA. It functions in the pathway amino-acid biosynthesis; L-lysine biosynthesis via DAP pathway; LL-2,6-diaminopimelate from (S)-tetrahydrodipicolinate (succinylase route): step 1/3. The chain is 2,3,4,5-tetrahydropyridine-2,6-dicarboxylate N-succinyltransferase from Albidiferax ferrireducens (strain ATCC BAA-621 / DSM 15236 / T118) (Rhodoferax ferrireducens).